A 485-amino-acid chain; its full sequence is Calcium-dependent protein kinase 27 (485 aa).

Gly2 carries the N-myristoyl glycine lipid modification. The Protein kinase domain occupies 28 to 290 (YILGEELGRG…AAEVLGHPWM (263 aa)). ATP contacts are provided by residues 34–42 (LGRGNFGLT) and Lys57. Residue Asp156 is the Proton acceptor of the active site. At Ser196 the chain carries Phosphoserine. The tract at residues 295-325 (ASDKPIDGVVLSRLKRFRDANKFKKVVLKFI) is autoinhibitory domain. 4 consecutive EF-hand domains span residues 332 to 367 (EEIK…LGSN), 368 to 403 (LSKT…RYKL), 404 to 439 (DRDE…DGAG), and 444 to 474 (IKQI…ESSL). Ca(2+) contacts are provided by Asp345, Asp347, Ser349, Asn351, Glu356, Asp381, Asp383, Asn385, Thr387, Glu392, Asp417, Asp419, Asp421, His423, Glu428, Asp452, Asp454, Asp456, Lys458, and Glu463.

This sequence belongs to the protein kinase superfamily. Ser/Thr protein kinase family. CDPK subfamily.

Its subcellular location is the membrane. The catalysed reaction is L-seryl-[protein] + ATP = O-phospho-L-seryl-[protein] + ADP + H(+). It catalyses the reaction L-threonyl-[protein] + ATP = O-phospho-L-threonyl-[protein] + ADP + H(+). With respect to regulation, activated by calcium. Autophosphorylation may play an important role in the regulation of the kinase activity. Functionally, may play a role in signal transduction pathways that involve calcium as a second messenger. This chain is Calcium-dependent protein kinase 27 (CPK27), found in Arabidopsis thaliana (Mouse-ear cress).